Here is a 481-residue protein sequence, read N- to C-terminus: Phosphoglucosamine mutase (481 aa).

Serine 129 (phosphoserine intermediate) is an active-site residue. The Mg(2+) site is built by serine 129, aspartate 271, aspartate 273, and aspartate 275. Serine 129 carries the phosphoserine modification.

This sequence belongs to the phosphohexose mutase family. Requires Mg(2+) as cofactor. Activated by phosphorylation.

It carries out the reaction alpha-D-glucosamine 1-phosphate = D-glucosamine 6-phosphate. Functionally, catalyzes the conversion of glucosamine-6-phosphate to glucosamine-1-phosphate. This Picosynechococcus sp. (strain ATCC 27264 / PCC 7002 / PR-6) (Agmenellum quadruplicatum) protein is Phosphoglucosamine mutase.